Reading from the N-terminus, the 65-residue chain is Weak neurotoxin 8 (65 aa).

Cystine bridges form between Cys-3/Cys-24, Cys-6/Cys-11, Cys-17/Cys-42, Cys-46/Cys-57, and Cys-58/Cys-63.

The protein belongs to the three-finger toxin family. Ancestral subfamily. Orphan group II sub-subfamily. Expressed by the venom gland.

Its subcellular location is the secreted. Its function is as follows. Binds with low affinity to muscular (alpha-1-beta-1-delta-epsilon/CHRNA1-CHRNB1-CHRND-CHRNE) and very low affinity to neuronal (alpha-7/CHRNA7) nicotinic acetylcholine receptor (nAChR). This chain is Weak neurotoxin 8, found in Naja naja (Indian cobra).